Consider the following 543-residue polypeptide: Cytochrome P450 307a1 (543 aa).

Phosphoserine is present on serine 219. Residues 440 to 460 (FLEPSKEQSPKNSKGSDSGIE) form a disordered region. Residues 449–460 (PKNSKGSDSGIE) are compositionally biased toward polar residues. Cysteine 485 lines the heme pocket.

It belongs to the cytochrome P450 family. The cofactor is heme.

Its subcellular location is the endoplasmic reticulum membrane. The protein resides in the microsome membrane. Functionally, required for correct development of the embryonic midline glial cells which are necessary for the formation of distinct segmental commissures. The sequence is that of Cytochrome P450 307a1 (spo) from Drosophila melanogaster (Fruit fly).